Reading from the N-terminus, the 264-residue chain is Small ribosomal subunit protein uS3 (264 aa).

The KH type-2 domain maps to 39–107 (VREYLKKKLK…PVHVNIEEIR (69 aa)). Positions 214–264 (PVETAAPREEERRPRRAPRGDRPDGARNGRPGGGRGRAPRKADAAPAPEGE) are disordered. Residues 219–240 (APREEERRPRRAPRGDRPDGAR) are compositionally biased toward basic and acidic residues.

This sequence belongs to the universal ribosomal protein uS3 family. Part of the 30S ribosomal subunit. Forms a tight complex with proteins S10 and S14.

In terms of biological role, binds the lower part of the 30S subunit head. Binds mRNA in the 70S ribosome, positioning it for translation. This chain is Small ribosomal subunit protein uS3, found in Bordetella avium (strain 197N).